Here is a 651-residue protein sequence, read N- to C-terminus: Far upstream element-binding protein 1 (651 aa).

2 disordered regions span residues 1-24 and 40-92; these read MADYSTVPPPSSGSAGGGGGGVVN and KIGG…HQQQ. The residue at position 2 (A2) is an N-acetylalanine. Phosphoserine occurs at positions 48 and 51. Residues 61-73 are compositionally biased toward basic and acidic residues; sequence RPLEDGDQPDAKK. KH domains are found at residues 96–160, 181–247, and 271–335; these read VMTE…KRLL, NAVQ…KEMV, and NEGI…AEII. Phosphoserine is present on S136. T149 carries the phosphothreonine modification. Residues R317, R355, R357, and R359 each carry the omega-N-methylarginine modification. One can recognise a KH 4 domain in the interval 372–439; it reads LQEFNFIVPT…QQIDYARQLI (68 aa). At S411 the chain carries Phosphoserine. Residue T428 is modified to Phosphothreonine. Disordered stretches follow at residues 443 to 528, 545 to 574, and 625 to 651; these read IGGP…GADP, AQPPPAAPAGAPATTQTNGQGDQQAPAPAG, and TSPQGMPQHPPAPQGFANHARSHHHLY. Pro residues predominate over residues 464-501; it reads PHGPPGPPGPGTPMGPYNPAPYNPGPPGPAPHGPPAPY. 2 stretches are compositionally biased toward low complexity: residues 514 to 528 and 552 to 574; these read QQQAPPDPAKAGADP and PAGAPATTQTNGQGDQQAPAPAG. The residue at position 626 (S626) is a Phosphoserine.

Found in a complex with PUF60 and far upstream element (FUSE) DNA segment. Interacts with PUF60 and JTV1. Post-translationally, ubiquitinated. This targets the protein for proteasome-mediated degradation.

It localises to the nucleus. Functionally, regulates MYC expression by binding to a single-stranded far-upstream element (FUSE) upstream of the MYC promoter. May act both as activator and repressor of transcription. The sequence is that of Far upstream element-binding protein 1 (Fubp1) from Mus musculus (Mouse).